The following is a 318-amino-acid chain: L-lactate dehydrogenase (318 aa).

NAD(+) is bound by residues Val17, Asp38, Lys43, Tyr69, and 83 to 84 (GA). Residues Gln86 and Arg92 each contribute to the substrate site. NAD(+) contacts are provided by residues Ser105, 122–124 (ATN), and Ser147. Substrate is bound at residue 124 to 127 (NPVD). 152–155 (DTAR) contacts substrate. Lys157 and His172 together coordinate beta-D-fructose 1,6-bisphosphate. The active-site Proton acceptor is His179. Phosphotyrosine is present on Tyr223. Substrate is bound at residue Thr232.

It belongs to the LDH/MDH superfamily. LDH family. As to quaternary structure, homotetramer.

The protein localises to the cytoplasm. It carries out the reaction (S)-lactate + NAD(+) = pyruvate + NADH + H(+). It participates in fermentation; pyruvate fermentation to lactate; (S)-lactate from pyruvate: step 1/1. With respect to regulation, allosterically activated by fructose 1,6-bisphosphate (FBP). Catalyzes the conversion of lactate to pyruvate. The polypeptide is L-lactate dehydrogenase (Staphylococcus saprophyticus subsp. saprophyticus (strain ATCC 15305 / DSM 20229 / NCIMB 8711 / NCTC 7292 / S-41)).